We begin with the raw amino-acid sequence, 398 residues long: Succinate--CoA ligase [ADP-forming] subunit beta (398 aa).

The ATP-grasp domain maps to 9–254; the sequence is KRLLHEYGAP…LSEEDPKEIE (246 aa). Residues Lys46, 53–55, Glu109, Ala112, and Glu117 contribute to the ATP site; that span reads GRG. Asn209 and Asp223 together coordinate Mg(2+). Residues Asn274 and 331 to 333 each bind substrate; that span reads GIM.

It belongs to the succinate/malate CoA ligase beta subunit family. As to quaternary structure, heterotetramer of two alpha and two beta subunits. Mg(2+) is required as a cofactor.

It carries out the reaction succinate + ATP + CoA = succinyl-CoA + ADP + phosphate. It catalyses the reaction GTP + succinate + CoA = succinyl-CoA + GDP + phosphate. Its pathway is carbohydrate metabolism; tricarboxylic acid cycle; succinate from succinyl-CoA (ligase route): step 1/1. In terms of biological role, succinyl-CoA synthetase functions in the citric acid cycle (TCA), coupling the hydrolysis of succinyl-CoA to the synthesis of either ATP or GTP and thus represents the only step of substrate-level phosphorylation in the TCA. The beta subunit provides nucleotide specificity of the enzyme and binds the substrate succinate, while the binding sites for coenzyme A and phosphate are found in the alpha subunit. In Bartonella quintana (strain Toulouse) (Rochalimaea quintana), this protein is Succinate--CoA ligase [ADP-forming] subunit beta.